A 619-amino-acid chain; its full sequence is Chaperone protein DnaK (619 aa).

Residue Thr179 is modified to Phosphothreonine; by autocatalysis. Positions 584-619 (QAKAQGAAGPQPGAQAQGQPNDGGKEDVVEAEVVDK) are disordered. The span at 585-605 (AKAQGAAGPQPGAQAQGQPND) shows a compositional bias: low complexity. The segment covering 606-619 (GGKEDVVEAEVVDK) has biased composition (basic and acidic residues).

Belongs to the heat shock protein 70 family.

Functionally, acts as a chaperone. This Elusimicrobium minutum (strain Pei191) protein is Chaperone protein DnaK.